The chain runs to 540 residues: Probable G-protein coupled receptor 75 (540 aa).

Polar residues predominate over residues 1-15; it reads MNSTGHLQDAPNATS. The tract at residues 1–27 is disordered; sequence MNSTGHLQDAPNATSLHVPHSQEGNST. The Extracellular segment spans residues 1–46; that stretch reads MNSTGHLQDAPNATSLHVPHSQEGNSTSLQEGLQDLIHTATLVTCT. Asn2, Asn12, and Asn25 each carry an N-linked (GlcNAc...) asparagine glycan. A helical transmembrane segment spans residues 47–67; it reads FLLAVIFCLGSYGNFIVFLSF. Residues 68 to 86 are Cytoplasmic-facing; sequence FDPAFRKFRTNFDFMILNL. A helical membrane pass occupies residues 87 to 107; the sequence is SFCDLFICGVTAPMFTFVLFF. Residues 108-120 lie on the Extracellular side of the membrane; sequence SSASSIPDAFCFT. A helical membrane pass occupies residues 121–141; that stretch reads FHLTSSGFIIMSLKTVAVIAL. Residues 142-160 lie on the Cytoplasmic side of the membrane; sequence HRLRMVLGKQPNRTASFPC. Residues 161-181 form a helical membrane-spanning segment; it reads TVLLTLLLWATSFTLATLATL. Topologically, residues 182 to 205 are extracellular; it reads KTSKSHLCLPMSSLIAGKGKAILS. A helical transmembrane segment spans residues 206–226; it reads LYVVDFTFCVAVVSVSYIMIA. Topologically, residues 227 to 318 are cytoplasmic; sequence QTLRKNAQVR…INLSTAKDSK (92 aa). Residues 319–339 form a helical membrane-spanning segment; the sequence is AVVTCVIIVLSVLVCCLPLGI. The Extracellular portion of the chain corresponds to 340 to 350; sequence SLVQVVLSSNG. The chain crosses the membrane as a helical span at residues 351–371; that stretch reads SFILYQFELFGFTLIFFKSGL. The Cytoplasmic segment spans residues 372-540; the sequence is NPFIYSRNSA…SAKQIPVPSV (169 aa).

It belongs to the G-protein coupled receptor 1 family. As to expression, expressed at high levels in brain and spinal cord and at detectable levels in retinal pigment epithelium. In situ hybridization of adult eye sections localized transcripts only to the perivascular cells, surrounding retinal arterioles, in the ganglion cell/nerve fiber layer. Also expressed by islet cells (at protein level).

It is found in the cell membrane. G protein-coupled receptor that is activated by the chemokine CCL5/RANTES. Probably coupled to heterotrimeric Gq proteins, it stimulates inositol trisphosphate production and calcium mobilization upon activation. Together with CCL5/RANTES, may play a role in neuron survival through activation of a downstream signaling pathway involving the PI3, Akt and MAP kinases. CCL5/RANTES may also regulate insulin secretion by pancreatic islet cells through activation of this receptor. The chain is Probable G-protein coupled receptor 75 (GPR75) from Homo sapiens (Human).